The chain runs to 370 residues: Uroporphyrinogen decarboxylase (370 aa).

Substrate contacts are provided by residues 29-33 (RQAGR), Asp-79, Tyr-155, Ser-210, and His-342.

Belongs to the uroporphyrinogen decarboxylase family. In terms of assembly, homodimer.

It localises to the cytoplasm. It catalyses the reaction uroporphyrinogen III + 4 H(+) = coproporphyrinogen III + 4 CO2. Its pathway is porphyrin-containing compound metabolism; protoporphyrin-IX biosynthesis; coproporphyrinogen-III from 5-aminolevulinate: step 4/4. Catalyzes the decarboxylation of four acetate groups of uroporphyrinogen-III to yield coproporphyrinogen-III. The chain is Uroporphyrinogen decarboxylase from Verminephrobacter eiseniae (strain EF01-2).